Consider the following 491-residue polypeptide: La-related protein 6 (491 aa).

A disordered region spans residues M1–P87. The residue at position 2 (A2) is an N-acetylalanine. Over residues E24–G37 the composition is skewed to acidic residues. Residues S56 and S58 each carry the phosphoserine modification. The HTH La-type RNA-binding domain maps to K86–P177. Positions K184–P296 constitute an RRM domain. Residues L186 to L193 carry the Nuclear export signal motif. 2 disordered regions span residues M293 to R403 and S423 to V491. Positions P296 to K302 match the Nuclear localization signal motif. The segment covering D332–P346 has biased composition (low complexity). 2 stretches are compositionally biased toward polar residues: residues N359–L386 and Q444–L453. The region spanning P427–E485 is the SUZ-C domain. Residues H482–V491 are compositionally biased toward basic and acidic residues.

Interacts (via the HTH domain) with VIM/vimentin. Interacts (via C-terminus) with non-muscle myosin MYH10. Interacts (via C-terminus) with DHX9. In terms of tissue distribution, expressed in numerous tissues.

The protein localises to the cytoplasm. Its subcellular location is the nucleus. Regulates the coordinated translation of type I collagen alpha-1 and alpha-2 mRNAs, CO1A1 and CO1A2. Stabilizes mRNAs through high-affinity binding of a stem-loop structure in their 5' UTR. This regulation requires VIM and MYH10 filaments, and the helicase DHX9. In Homo sapiens (Human), this protein is La-related protein 6 (LARP6).